Reading from the N-terminus, the 489-residue chain is Rhamnulokinase (489 aa).

An ATP-binding site is contributed by 13 to 17 (ASSGR). Residues cysteine 68 and cysteine 222 are joined by a disulfide bond. Residues glycine 83 and 236–238 (HDT) contribute to the substrate site. Aspartate 237 (proton acceptor) is an active-site residue. Threonine 259 serves as a coordination point for ATP. Asparagine 296 lines the substrate pocket. Glutamine 304 provides a ligand contact to ATP. The cysteines at positions 353 and 370 are disulfide-linked. An ATP-binding site is contributed by glycine 402. Cysteine 413 and cysteine 417 are oxidised to a cystine.

It belongs to the rhamnulokinase family. In terms of assembly, monomer. It depends on Mg(2+) as a cofactor.

It carries out the reaction L-rhamnulose + ATP = L-rhamnulose 1-phosphate + ADP + H(+). It functions in the pathway carbohydrate degradation; L-rhamnose degradation; glycerone phosphate from L-rhamnose: step 2/3. Its function is as follows. Involved in the catabolism of L-rhamnose (6-deoxy-L-mannose). Catalyzes the transfer of the gamma-phosphate group from ATP to the 1-hydroxyl group of L-rhamnulose to yield L-rhamnulose 1-phosphate. The protein is Rhamnulokinase of Escherichia coli O139:H28 (strain E24377A / ETEC).